A 453-amino-acid polypeptide reads, in one-letter code: Phenylalanine-4-hydroxylase (453 aa).

N-acetylalanine is present on alanine 2. Serine 16 carries the phosphoserine modification. Positions serine 36 to glutamate 114 constitute an ACT domain. Histidine 285, histidine 290, and glutamate 330 together coordinate Fe cation.

This sequence belongs to the biopterin-dependent aromatic amino acid hydroxylase family. As to quaternary structure, homodimer and homotetramer. It depends on Fe(2+) as a cofactor. Post-translationally, phosphorylation at Ser-16 increases basal activity and facilitates activation by the substrate phenylalanine.

It catalyses the reaction (6R)-L-erythro-5,6,7,8-tetrahydrobiopterin + L-phenylalanine + O2 = (4aS,6R)-4a-hydroxy-L-erythro-5,6,7,8-tetrahydrobiopterin + L-tyrosine. Its pathway is amino-acid degradation; L-phenylalanine degradation; acetoacetate and fumarate from L-phenylalanine: step 1/6. N-terminal region of PAH is thought to contain allosteric binding sites for phenylalanine and to constitute an 'inhibitory' domain that regulates the activity of a catalytic domain in the C-terminal portion of the molecule. Catalyzes the hydroxylation of L-phenylalanine to L-tyrosine. The chain is Phenylalanine-4-hydroxylase (Pah) from Mus musculus (Mouse).